Reading from the N-terminus, the 208-residue chain is Outer-membrane lipoprotein carrier protein (208 aa).

The first 22 residues, 1–22 (MKNLLCAVMLTSPLLYSTAVFA), serve as a signal peptide directing secretion.

Belongs to the LolA family. In terms of assembly, monomer.

It is found in the periplasm. Its function is as follows. Participates in the translocation of lipoproteins from the inner membrane to the outer membrane. Only forms a complex with a lipoprotein if the residue after the N-terminal Cys is not an aspartate (The Asp acts as a targeting signal to indicate that the lipoprotein should stay in the inner membrane). In Shewanella sp. (strain W3-18-1), this protein is Outer-membrane lipoprotein carrier protein.